Here is an 805-residue protein sequence, read N- to C-terminus: Leucine--tRNA ligase (805 aa).

Positions 40-51 (PYPSGSGLHVGH) match the 'HIGH' region motif. Positions 576 to 580 (KMSKS) match the 'KMSKS' region motif. Lys579 provides a ligand contact to ATP.

The protein belongs to the class-I aminoacyl-tRNA synthetase family.

It localises to the cytoplasm. The catalysed reaction is tRNA(Leu) + L-leucine + ATP = L-leucyl-tRNA(Leu) + AMP + diphosphate. The chain is Leucine--tRNA ligase from Chlorobium limicola (strain DSM 245 / NBRC 103803 / 6330).